A 516-amino-acid chain; its full sequence is uncharacterized protein (516 aa).

Positions 1-22 (MLYRFWKTGLAIFMPGCILLSS) are cleaved as a signal peptide. Residue cysteine 23 is the site of N-palmitoyl cysteine attachment. Cysteine 23 is lipidated: S-diacylglycerol cysteine.

This sequence belongs to the MG067/MG068/MG395 family.

The protein resides in the cell membrane. This is an uncharacterized protein from Mycoplasma genitalium (strain ATCC 33530 / DSM 19775 / NCTC 10195 / G37) (Mycoplasmoides genitalium).